The primary structure comprises 511 residues: Cytochrome P450 monooxygenase cypX (511 aa).

The helical transmembrane segment at 18-38 (LPFSLALVAAAFVLYNIVSII) threads the bilayer. N-linked (GlcNAc...) asparagine glycosylation is found at Asn-162 and Asn-407. Cys-454 contacts heme.

This sequence belongs to the cytochrome P450 family. Heme serves as cofactor.

It is found in the membrane. Its pathway is mycotoxin biosynthesis. Functionally, cytochrome P450 monooxygenase; part of the fragmented gene cluster that mediates the biosynthesis of dothistromin (DOTH), a polyketide toxin very similar in structure to the aflatoxin precursor, versicolorin B. The first step of the pathway is the conversion of acetate to norsolorinic acid (NOR) and requires the fatty acid synthase subunits hexA and hexB, as well as the polyketide synthase pksA. PksA combines a hexanoyl starter unit and 7 malonyl-CoA extender units to synthesize the precursor NOR. The hexanoyl starter unit is provided to the acyl-carrier protein (ACP) domain by the fungal fatty acid synthase hexA/hexB. The second step is the conversion of NOR to averantin (AVN) and requires the norsolorinic acid ketoreductase nor1, which catalyzes the dehydration of norsolorinic acid to form (1'S)-averantin. The cytochrome P450 monooxygenase avnA then catalyzes the hydroxylation of AVN to 5'hydroxyaverantin (HAVN). The next step is performed by adhA that transforms HAVN to averufin (AVF). Averufin might then be converted to hydroxyversicolorone by cypX and avfA. Hydroxyversicolorone is further converted versiconal hemiacetal acetate (VHA) by moxY. VHA is then the substrate for the versiconal hemiacetal acetate esterase est1 to yield versiconal (VAL). Versicolorin B synthase vbsA then converts VAL to versicolorin B (VERB) by closing the bisfuran ring. Then, the activity of the versicolorin B desaturase verB leads to versicolorin A (VERA). DotB, a predicted chloroperoxidase, may perform epoxidation of the A-ring of VERA. Alternatively, a cytochrome P450, such as cypX or avnA could catalyze this step. It is also possible that another, uncharacterized, cytochrome P450 enzyme is responsible for this step. Opening of the epoxide could potentially be achieved by the epoxide hydrolase epoA. However, epoA seems not to be required for DOTH biosynthesis, but other epoxide hydrolases may have the ability to complement this hydrolysis. Alternatively, opening of the epoxide ring could be achieved non-enzymatically. The next step is the deoxygenation of ring A to yield the 5,8-dihydroxyanthraquinone which is most likely catalyzed by the NADPH dehydrogenase encoded by ver1. The last stages of DOTH biosynthesis are proposed to involve hydroxylation of the bisfuran. OrdB and norB might have oxidative roles here. An alternative possibility is that cytochrome P450 monoogenases such as avnA and cypX might perform these steps in addition to previously proposed steps. The polypeptide is Cytochrome P450 monooxygenase cypX (Dothistroma septosporum (Red band needle blight fungus)).